The chain runs to 561 residues: Putative transport protein YbjL (561 aa).

The next 5 helical transmembrane spans lie at 8-28, 32-52, 66-86, 94-114, and 158-178; these read LLNG…LCLG, LGSI…LLGQ, FMLF…SIFF, MLAL…GKLF, and NLSL…IVGA. 2 consecutive RCK C-terminal domains span residues 200–288 and 292–373; these read RGLD…SFRN and VFDR…RIGF. Helical transmembrane passes span 383-403, 406-426, 451-471, 475-495, 503-523, and 540-560; these read LLAF…TFQF, FSFG…LGFM, VFMA…LGAI, MLIA…LFGA, ALLF…EIIS, and AIAN…CPGL.

This sequence belongs to the AAE transporter (TC 2.A.81) family. YbjL subfamily.

Its subcellular location is the cell membrane. The chain is Putative transport protein YbjL from Shigella dysenteriae serotype 1 (strain Sd197).